Consider the following 271-residue polypeptide: Tryptophan synthase alpha chain (271 aa).

Catalysis depends on proton acceptor residues glutamate 49 and aspartate 60.

This sequence belongs to the TrpA family. In terms of assembly, tetramer of two alpha and two beta chains.

It carries out the reaction (1S,2R)-1-C-(indol-3-yl)glycerol 3-phosphate + L-serine = D-glyceraldehyde 3-phosphate + L-tryptophan + H2O. Its pathway is amino-acid biosynthesis; L-tryptophan biosynthesis; L-tryptophan from chorismate: step 5/5. Its function is as follows. The alpha subunit is responsible for the aldol cleavage of indoleglycerol phosphate to indole and glyceraldehyde 3-phosphate. The sequence is that of Tryptophan synthase alpha chain from Burkholderia ambifaria (strain MC40-6).